The chain runs to 39 residues: Photosystem II reaction center protein J (39 aa).

Residues 9–29 (LWLVGLVGGFAVITIVSLFIY) form a helical membrane-spanning segment.

The protein belongs to the PsbJ family. As to quaternary structure, PSII is composed of 1 copy each of membrane proteins PsbA, PsbB, PsbC, PsbD, PsbE, PsbF, PsbH, PsbI, PsbJ, PsbK, PsbL, PsbM, PsbT, PsbX, PsbY, PsbZ, Psb30/Ycf12, at least 3 peripheral proteins of the oxygen-evolving complex and a large number of cofactors. It forms dimeric complexes.

Its subcellular location is the plastid. It is found in the chloroplast thylakoid membrane. Functionally, one of the components of the core complex of photosystem II (PSII). PSII is a light-driven water:plastoquinone oxidoreductase that uses light energy to abstract electrons from H(2)O, generating O(2) and a proton gradient subsequently used for ATP formation. It consists of a core antenna complex that captures photons, and an electron transfer chain that converts photonic excitation into a charge separation. This chain is Photosystem II reaction center protein J, found in Thalassiosira pseudonana (Marine diatom).